Consider the following 288-residue polypeptide: Oxaloacetate decarboxylase (288 aa).

Residue S47 coordinates substrate. D85 contacts Mg(2+). Substrate contacts are provided by R156 and H232.

The protein belongs to the isocitrate lyase/PEP mutase superfamily. Oxaloacetate decarboxylase family. In terms of assembly, homotetramer; dimer of dimers. The cofactor is Mg(2+).

It catalyses the reaction oxaloacetate + H(+) = pyruvate + CO2. Functionally, catalyzes the decarboxylation of oxaloacetate into pyruvate. Seems to play a role in maintaining cellular concentrations of bicarbonate and pyruvate. This chain is Oxaloacetate decarboxylase, found in Bradyrhizobium sp. (strain ORS 278).